The primary structure comprises 463 residues: Cytoplasmic tRNA 2-thiolation protein 2 (463 aa).

The protein belongs to the CTU2/NCS2 family.

It localises to the cytoplasm. It participates in tRNA modification; 5-methoxycarbonylmethyl-2-thiouridine-tRNA biosynthesis. Its function is as follows. Plays a central role in 2-thiolation of mcm(5)S(2)U at tRNA wobble positions of tRNA(Lys), tRNA(Glu) and tRNA(Gln). May act by forming a heterodimer with NCS6 that ligates sulfur from thiocarboxylated URM1 onto the uridine of tRNAs at wobble position. Prior mcm(5) tRNA modification by the elongator complex is required for 2-thiolation. May also be involved in protein urmylation. This Kluyveromyces lactis (strain ATCC 8585 / CBS 2359 / DSM 70799 / NBRC 1267 / NRRL Y-1140 / WM37) (Yeast) protein is Cytoplasmic tRNA 2-thiolation protein 2.